Reading from the N-terminus, the 607-residue chain is Fucose-1-phosphate guanylyltransferase (607 aa).

Residues 1-21 (MRAVRRGLREGGAMAAARDPP) form a disordered region.

Expressed in many tissues.

Its subcellular location is the cytoplasm. It catalyses the reaction beta-L-fucose 1-phosphate + GTP + H(+) = GDP-beta-L-fucose + diphosphate. Catalyzes the formation of GDP-L-fucose from GTP and L-fucose-1-phosphate. Functions as a salvage pathway to reutilize L-fucose arising from the turnover of glycoproteins and glycolipids. The chain is Fucose-1-phosphate guanylyltransferase from Homo sapiens (Human).